We begin with the raw amino-acid sequence, 447 residues long: Dihydroorotase (447 aa).

Zn(2+) contacts are provided by His81 and His83. Residues His83–Arg85 and Asn115 each bind substrate. The Zn(2+) site is built by Asp171, His198, and His252. Residue Asn298 participates in substrate binding. Position 325 (Asp325) interacts with Zn(2+). The active site involves Asp325. Substrate is bound by residues His329 and Phe343–Gly344.

The protein belongs to the metallo-dependent hydrolases superfamily. DHOase family. Class I DHOase subfamily. It depends on Zn(2+) as a cofactor.

It carries out the reaction (S)-dihydroorotate + H2O = N-carbamoyl-L-aspartate + H(+). It participates in pyrimidine metabolism; UMP biosynthesis via de novo pathway; (S)-dihydroorotate from bicarbonate: step 3/3. Catalyzes the reversible cyclization of carbamoyl aspartate to dihydroorotate. The chain is Dihydroorotase from Ehrlichia canis (strain Jake).